The following is a 2193-amino-acid chain: MGAQVSTQKTGAHEASLSATGSSIIHYTNINYYKDSASNSANRQDFTQDPSKFTEPVKDVMIKSLPALNSPSAEECGFSDRVRSITIGNSTITTQECANVVVAYGRWPTYLRDDEATAEDQPTQPDVATCRFYTLESVQWQENSAGWWWKFPDALSNMGLFGQNMLYHYLGRAGYTIHVQCNASKFHQGCLLVVCVPEAEMGCSKVDGVVNAQGLSKGEIPIEFERTSTTAEVGVVQKAVYNAGMGIGVGNLTIFPHQWINLRTNNSATIVIPYINCVPMDNMFRHNNFTLMVIPFAPLKSSGGTNYVPVTITVAPMDAEYNGLRLAGHQGLPTMNTPGSTQFLTSDDFQSPCAMPEFDVTPCMDIPGKVHNLMEIAEVDIGVPVNNTSTHMEGTDAFQIKVTAGNVQDKNAIFSFQLNPGNSTVLRRTLLGEILNYYAHWSGSIKLTFLFCGSAMATGKLLLAYSPPGASVPKARRDAMLGTHVIWDVGLQSSCVLCVPWISQTHYRLVAQDEYTSAGYITCWYQTNIVVPPETPSDCVVLCFVSACNDFSVRMLKDTPFIEQTTELQSDVREAVEGAIGRVADTIRSGPSNSEAVPALTAAETGHTSQVVPSDTMQTRHVKNYHSRSESTIENFLCRSACVRMAKYEARGNLKALTLDAWEISVRDMVQLRRKCEMFTYLRFDVEVTFVITSYQRQGTSSIQICPYDAHQIMYIPPGGPIPKKVDGYEWQTSTNPSIFWTEGNAPPRMSIPFISIGNAYSSFYDGWSHFDSKGAYGFNTLNKMGHIYCRHVNKETPTKVTSYIRIYFKPKHVRAWVPRPPRLCQYMNKANVNFEATAVTDTRDTINTVPLSTHGVSRGAYGHQSGARYVGNYRIVNRHLATHTDWQKCVWEDYNRDLLVSTTTAHGCDTIARCQCTTGVYFCASKNKHYPVSFEGPGLVEVQASEYYPKRYQSHVLLAAGFSEPGDCGGILRCEHGVIGIVTMGGEGVVGFADVRDLLWLEDDAMEQGVKDYVEQLGNAFGSGFTNQICEQVNLLKESLVGQDSILEKSLKALVKIISALVIVVRNHDDLITVTAVLALIGCTTSPWRWLKQKVSQYYGIPMAERQNNRWLKKFTEMTNACKGMEWIAIKIQKFIEWLKIKILPEVKEKHEFLNRLKQLPLLESQIATIEQSAPSQGDQEQLFSNIQYFAHYCRKYAPLYAAEAKRVFSLEKKMSNYIQFKSKCRIEPVCLLLHGSPGAGKSVATNLIGRSLAEKLNSSVYSLPPDPDHFDGYKQQAVVIMDDLCQNPDGKDVSLFCQMVSSVDFVPPMAALEEKGILFTSPFVLASTNAGSINAPTVSDSRALARRFHFDMNIEVISMYSQNGKINMPMSVKTCDEECCPVNFKKCCPLVCGKAIQFIDRRTQVRYSLDMLVTEMFREYNHRHSVGTTLEALFQGPPIYREIKISVAPETPPPPAIADLLKSVDSEAVREYCKEKGWLVPEVNSTLQIEKHVSRAFICLQALTTFVSVAGIIYIIYKLFAGFQGAYTGMPNQKPRVPTLRQAKVQGPAFEFAVAMMKRNSSTVKTEYGEFTMLGIYDRWAVLPRHAKPGPTILMNDQEVGVLDAKELVDKDGTNLELTLLKLNRNEKFRDIRGFLAKEEVEVNEAVLAINTSKFPNMYIPVGQVTDYGFLNLGGTPTKRMLMYNFPTRAGQCGGVLMSTGKVLGIHVGGNGHQGFSAALLKHYFNDEQGEIEFIESSKEAGFPVINTPSKTKLEPSVFHQVFEGNKEPAVLRNGDPRLKANFEEALFSKYIGNVNTHVDEYMLEAVDHYAGQLATLDISTEPMRLEDAVYGTEGLEALDLTTSAGYPYVALGIKKRDILSKKTRDLTKLKECMDKYGLNLPMVTYVKDELRSAEKVAKGKSRLIEASSLNDSVAMRQTFGNLYKTFHLNPGIVTGSASGCDPDLFWSKIPVMLDGHLIAFDYSGYDASLSPVWFACLKLLLEKLGYSHKETNYIDYLCNSHHLYRDKHYFVRGGMPSGCSGTSIFNSMINNIIIRTLMLKVYKGIDLDQFRMIAYGDDVIASYPWPIDASLLAEAGKDYGLIMTPADKGECFNEVTWTNVTFLKRYFRADEQYPFLVHPVMPMKDIHESIRWTKDPKNTQDHVRSLCLLAWHNGEREYEEFIRKIRSVPVGRCLTLPAFSTLRRKWLDSF.

Gly-2 carries the N-myristoyl glycine; by host lipid modification. Topologically, residues 2–1503 (GAQVSTQKTG…HVSRAFICLQ (1502 aa)) are cytoplasmic. The segment at 567–583 (ELQSDVREAVEGAIGRV) is amphipathic alpha-helix. Active-site for protease 2A activity residues include His-880 and Asp-898. Zn(2+) contacts are provided by Cys-915 and Cys-917. Cys-969 serves as the catalytic For protease 2A activity. Residues Cys-975 and His-977 each coordinate Zn(2+). The segment at 1109–1181 (NNRWLKKFTE…EQSAPSQGDQ (73 aa)) is membrane-binding. The oligomerization stretch occupies residues 1109–1247 (NNRWLKKFTE…SPGAGKSVAT (139 aa)). Positions 1130–1134 (AIKIQ) are RNA-binding. Residues 1213–1369 (EKKMSNYIQF…SMYSQNGKIN (157 aa)) form the SF3 helicase domain. The Zn(2+) site is built by Cys-1377, Cys-1389, and Cys-1394. A C4-type; degenerate zinc finger spans residues 1377 to 1394 (CDEECCPVNFKKCCPLVC). The tract at residues 1421 to 1428 (EYNHRHSV) is RNA-binding. Positions 1432–1437 (LEALFQ) are oligomerization. The stretch at 1504 to 1519 (ALTTFVSVAGIIYIIY) is an intramembrane region. Topologically, residues 1520-2193 (KLFAGFQGAY…TLRRKWLDSF (674 aa)) are cytoplasmic. Tyr-1529 carries the O-(5'-phospho-RNA)-tyrosine modification. Residues 1549-1727 (GPAFEFAVAM…FSAALLKHYF (179 aa)) enclose the Peptidase C3 domain. Active-site for protease 3C activity residues include His-1588, Glu-1619, and Cys-1695. Residues 1958 to 2074 (GHLIAFDYSG…SYPWPIDASL (117 aa)) form the RdRp catalytic domain. Asp-1964 and Asp-2060 together coordinate Mg(2+).

Belongs to the picornaviruses polyprotein family. Interacts with capsid protein VP1 and capsid protein VP3 to form heterotrimeric protomers. In terms of assembly, interacts with capsid protein VP0, and capsid protein VP3 to form heterotrimeric protomers. Five protomers subsequently associate to form pentamers which serve as building blocks for the capsid. Interacts with capsid protein VP2, capsid protein VP3 and capsid protein VP4 following cleavage of capsid protein VP0. As to quaternary structure, interacts with capsid protein VP1 and capsid protein VP3 in the mature capsid. Interacts with capsid protein VP0 and capsid protein VP1 to form heterotrimeric protomers. Five protomers subsequently associate to form pentamers which serve as building blocks for the capsid. Interacts with capsid protein VP4 in the mature capsid. Interacts with protein 2C; this interaction may be important for virion morphogenesis. In terms of assembly, interacts with capsid protein VP1 and capsid protein VP3. As to quaternary structure, homodimer. Homohexamer; forms a hexameric ring structure with 6-fold symmetry characteristic of AAA+ ATPases. Interacts (via N-terminus) with host RTN3 (via reticulon domain); this interaction is important for viral replication. Interacts with capsid protein VP3; this interaction may be important for virion morphogenesis. In terms of assembly, interacts with protein 3CD. As to quaternary structure, homodimer. Interacts with host GBF1. Interacts (via GOLD domain) with host ACBD3 (via GOLD domain); this interaction allows the formation of a viral protein 3A/ACBD3 heterotetramer with a 2:2 stoichiometry, which will stimulate the recruitment of host PI4KB in order to synthesize PI4P at the viral RNA replication sites. Interacts with RNA-directed RNA polymerase. In terms of assembly, interacts with protein 3AB and with RNA-directed RNA polymerase. As to quaternary structure, interacts with Viral protein genome-linked and with protein 3CD. Mg(2+) serves as cofactor. Specific enzymatic cleavages in vivo by the viral proteases yield processing intermediates and the mature proteins. In terms of processing, myristoylation is required for the formation of pentamers during virus assembly. Further assembly of 12 pentamers and a molecule of genomic RNA generates the provirion. Post-translationally, during virion maturation, immature virions are rendered infectious following cleavage of VP0 into VP4 and VP2. This maturation seems to be an autocatalytic event triggered by the presence of RNA in the capsid and it is followed by a conformational change infectious virion. Myristoylation is required during RNA encapsidation and formation of the mature virus particle. In terms of processing, VPg is uridylylated by the polymerase into VPg-pUpU. This acts as a nucleotide-peptide primer for the genomic RNA replication.

Its subcellular location is the virion. The protein localises to the host cytoplasm. The protein resides in the host cytoplasmic vesicle membrane. It localises to the host nucleus. It catalyses the reaction a ribonucleoside 5'-triphosphate + H2O = a ribonucleoside 5'-diphosphate + phosphate + H(+). The enzyme catalyses Selective cleavage of Tyr-|-Gly bond in the picornavirus polyprotein.. The catalysed reaction is RNA(n) + a ribonucleoside 5'-triphosphate = RNA(n+1) + diphosphate. It carries out the reaction Selective cleavage of Gln-|-Gly bond in the poliovirus polyprotein. In other picornavirus reactions Glu may be substituted for Gln, and Ser or Thr for Gly.. With respect to regulation, replication or transcription is subject to high level of random mutations by the nucleotide analog ribavirin. In terms of biological role, forms an icosahedral capsid of pseudo T=3 symmetry with capsid proteins VP2 and VP3. The capsid is 300 Angstroms in diameter, composed of 60 copies of each capsid protein and enclosing the viral positive strand RNA genome. Capsid protein VP1 mainly forms the vertices of the capsid. Capsid protein VP1 interacts with host cell receptor to provide virion attachment to target host cells. This attachment induces virion internalization. Tyrosine kinases are probably involved in the entry process. After binding to its receptor, the capsid undergoes conformational changes. Capsid protein VP1 N-terminus (that contains an amphipathic alpha-helix) and capsid protein VP4 are externalized. Together, they shape a pore in the host membrane through which viral genome is translocated to host cell cytoplasm. Forms an icosahedral capsid of pseudo T=3 symmetry with capsid proteins VP2 and VP3. The capsid is 300 Angstroms in diameter, composed of 60 copies of each capsid protein and enclosing the viral positive strand RNA genome. Its function is as follows. Lies on the inner surface of the capsid shell. After binding to the host receptor, the capsid undergoes conformational changes. Capsid protein VP4 is released, Capsid protein VP1 N-terminus is externalized, and together, they shape a pore in the host membrane through which the viral genome is translocated into the host cell cytoplasm. Functionally, component of immature procapsids, which is cleaved into capsid proteins VP4 and VP2 after maturation. Allows the capsid to remain inactive before the maturation step. In terms of biological role, cysteine protease that cleaves viral polyprotein and specific host proteins. It is responsible for the autocatalytic cleavage between the P1 and P2 regions, which is the first cleavage occurring in the polyprotein. Also cleaves the host translation initiation factor EIF4G1, in order to shut down the capped cellular mRNA translation. Inhibits the host nucleus-cytoplasm protein and RNA trafficking by cleaving host members of the nuclear pores. Counteracts stress granule formation probably by antagonizing its assembly or promoting its dissassembly. Plays an essential role in the virus replication cycle by acting as a viroporin. Creates a pore in the host endoplasmic reticulum and as a consequence releases Ca2+ in the cytoplasm of infected cell. In turn, high levels of cytoplasmic calcium may trigger membrane trafficking and transport of viral ER-associated proteins to viroplasms, sites of viral genome replication. Its function is as follows. Induces and associates with structural rearrangements of intracellular membranes. Displays RNA-binding, nucleotide binding and NTPase activities. May play a role in virion morphogenesis and viral RNA encapsidation by interacting with the capsid protein VP3. Functionally, localizes the viral replication complex to the surface of membranous vesicles. Together with protein 3CD binds the Cis-Active RNA Element (CRE) which is involved in RNA synthesis initiation. Acts as a cofactor to stimulate the activity of 3D polymerase, maybe through a nucleid acid chaperone activity. In terms of biological role, localizes the viral replication complex to the surface of membranous vesicles. It inhibits host cell endoplasmic reticulum-to-Golgi apparatus transport and causes the disassembly of the Golgi complex, possibly through GBF1 interaction. This would result in depletion of MHC, trail receptors and IFN receptors at the host cell surface. Plays an essential role in viral RNA replication by recruiting ACBD3 and PI4KB at the viral replication sites, thereby allowing the formation of the rearranged membranous structures where viral replication takes place. Acts as a primer for viral RNA replication and remains covalently bound to viral genomic RNA. VPg is uridylylated prior to priming replication into VPg-pUpU. The oriI viral genomic sequence may act as a template for this. The VPg-pUpU is then used as primer on the genomic RNA poly(A) by the RNA-dependent RNA polymerase to replicate the viral genome. During genome replication, the VPg-RNA linkage is removed by the host TDP2, thereby accelerating replication. During the late stage of the replication cycle, host TDP2 is excluded from sites of viral RNA synthesis and encapsidation, allowing for the generation of progeny virions. Its function is as follows. Involved in the viral replication complex and viral polypeptide maturation. It exhibits protease activity with a specificity and catalytic efficiency that is different from protease 3C. Protein 3CD lacks polymerase activity. Protein 3CD binds to the 5'UTR of the viral genome. Functionally, replicates the viral genomic RNA on the surface of intracellular membranes. May form linear arrays of subunits that propagate along a strong head-to-tail interaction called interface-I. Covalently attaches UMP to a tyrosine of VPg, which is used to prime RNA synthesis. The positive stranded RNA genome is first replicated at virus induced membranous vesicles, creating a dsRNA genomic replication form. This dsRNA is then used as template to synthesize positive stranded RNA genomes. ss(+)RNA genomes are either translated, replicated or encapsidated. In terms of biological role, major viral protease that mediates proteolytic processing of the polyprotein. Cleaves host EIF5B, contributing to host translation shutoff. Also cleaves host PABPC1, contributing to host translation shutoff. Cleaves host NLRP1, triggers host N-glycine-mediated degradation of the autoinhibitory NLRP1 N-terminal fragment. The sequence is that of Genome polyprotein from Echovirus 9 (strain Hill).